The following is an 83-amino-acid chain: Type 3 secretion system needle filament protein (83 aa).

This sequence belongs to the SctF family. The core secretion machinery of the T3SS is composed of approximately 20 different proteins, including cytoplasmic components, a base, an export apparatus and a needle. This subunit polymerizes and forms the helical needle filament. Interacts with the needle tip protein IpaD/SctA. Interacts with the export apparatus components SpaP/SctR, SpaQ/SctS and SpaR/SctT.

It localises to the secreted. The protein resides in the cell surface. In terms of biological role, component of the type III secretion system (T3SS), also called injectisome, which is used to inject bacterial effector proteins into eukaryotic host cells. MxiH/SctF forms the external needle filament that protrudes from the bacterial surface. Its function is as follows. During infection, can induce innate immune responses. The needle proteins interact with host TLR2 or TLR4, and induce signaling by NF-kappa-B and/or AP-1. This activation is MyD88 dependent and results in increased expression of cytokines, including TNF-alpha, IL-6 and IL-8. The polypeptide is Type 3 secretion system needle filament protein (Shigella flexneri).